The sequence spans 557 residues: 2-succinyl-5-enolpyruvyl-6-hydroxy-3-cyclohexene-1-carboxylate synthase (557 aa).

The segment at 183–206 (YGGTEHPPVAPPLPPRRAPRAAAP) is disordered.

It belongs to the TPP enzyme family. MenD subfamily. As to quaternary structure, homodimer. Mg(2+) is required as a cofactor. Requires Mn(2+) as cofactor. Thiamine diphosphate serves as cofactor.

The enzyme catalyses isochorismate + 2-oxoglutarate + H(+) = 5-enolpyruvoyl-6-hydroxy-2-succinyl-cyclohex-3-ene-1-carboxylate + CO2. It functions in the pathway quinol/quinone metabolism; 1,4-dihydroxy-2-naphthoate biosynthesis; 1,4-dihydroxy-2-naphthoate from chorismate: step 2/7. Its pathway is quinol/quinone metabolism; menaquinone biosynthesis. Catalyzes the thiamine diphosphate-dependent decarboxylation of 2-oxoglutarate and the subsequent addition of the resulting succinic semialdehyde-thiamine pyrophosphate anion to isochorismate to yield 2-succinyl-5-enolpyruvyl-6-hydroxy-3-cyclohexene-1-carboxylate (SEPHCHC). The chain is 2-succinyl-5-enolpyruvyl-6-hydroxy-3-cyclohexene-1-carboxylate synthase from Halorhodospira halophila (strain DSM 244 / SL1) (Ectothiorhodospira halophila (strain DSM 244 / SL1)).